Consider the following 354-residue polypeptide: UDP-N-acetylglucosamine--N-acetylmuramyl-(pentapeptide) pyrophosphoryl-undecaprenol N-acetylglucosamine transferase (354 aa).

UDP-N-acetyl-alpha-D-glucosamine contacts are provided by residues 13–15 (SGG), Asn-125, Ser-189, Ile-242, 261–266 (ALTVSE), and Gln-286.

The protein belongs to the glycosyltransferase 28 family. MurG subfamily.

Its subcellular location is the cell inner membrane. It catalyses the reaction di-trans,octa-cis-undecaprenyl diphospho-N-acetyl-alpha-D-muramoyl-L-alanyl-D-glutamyl-meso-2,6-diaminopimeloyl-D-alanyl-D-alanine + UDP-N-acetyl-alpha-D-glucosamine = di-trans,octa-cis-undecaprenyl diphospho-[N-acetyl-alpha-D-glucosaminyl-(1-&gt;4)]-N-acetyl-alpha-D-muramoyl-L-alanyl-D-glutamyl-meso-2,6-diaminopimeloyl-D-alanyl-D-alanine + UDP + H(+). It participates in cell wall biogenesis; peptidoglycan biosynthesis. Functionally, cell wall formation. Catalyzes the transfer of a GlcNAc subunit on undecaprenyl-pyrophosphoryl-MurNAc-pentapeptide (lipid intermediate I) to form undecaprenyl-pyrophosphoryl-MurNAc-(pentapeptide)GlcNAc (lipid intermediate II). This chain is UDP-N-acetylglucosamine--N-acetylmuramyl-(pentapeptide) pyrophosphoryl-undecaprenol N-acetylglucosamine transferase, found in Buchnera aphidicola subsp. Acyrthosiphon pisum (strain 5A).